Here is a 494-residue protein sequence, read N- to C-terminus: UPF0371 protein spr0309 (494 aa).

The protein belongs to the UPF0371 family.

This chain is UPF0371 protein spr0309, found in Streptococcus pneumoniae (strain ATCC BAA-255 / R6).